The following is a 354-amino-acid chain: Glutamine synthetase (354 aa).

The 80-residue stretch at 22–101 (IQAEYVWVDG…VLAETYNSDG (80 aa)) folds into the GS beta-grasp domain. Positions 108–354 (FRHHAAKVME…IIVETTLLNA (247 aa)) constitute a GS catalytic domain.

It belongs to the glutamine synthetase family. As to quaternary structure, homooctamer.

The protein localises to the cytoplasm. The enzyme catalyses L-glutamate + NH4(+) + ATP = L-glutamine + ADP + phosphate + H(+). The sequence is that of Glutamine synthetase (GLN1) from Hebeloma cylindrosporum.